The primary structure comprises 354 residues: Uroporphyrinogen decarboxylase (354 aa).

Residues 27–31, aspartate 77, tyrosine 154, serine 209, and histidine 327 contribute to the substrate site; that span reads RQAGR.

Belongs to the uroporphyrinogen decarboxylase family. As to quaternary structure, homodimer.

It is found in the cytoplasm. It catalyses the reaction uroporphyrinogen III + 4 H(+) = coproporphyrinogen III + 4 CO2. The protein operates within porphyrin-containing compound metabolism; protoporphyrin-IX biosynthesis; coproporphyrinogen-III from 5-aminolevulinate: step 4/4. Its function is as follows. Catalyzes the decarboxylation of four acetate groups of uroporphyrinogen-III to yield coproporphyrinogen-III. The sequence is that of Uroporphyrinogen decarboxylase from Shewanella putrefaciens (strain CN-32 / ATCC BAA-453).